The chain runs to 378 residues: Flap endonuclease 1 (378 aa).

Positions 1–104 (MGVKDLSKVI…SELEKRTERR (104 aa)) are N-domain. Position 34 (aspartate 34) interacts with Mg(2+). 2 residues coordinate DNA: arginine 47 and arginine 70. Aspartate 86 contacts Mg(2+). The tract at residues 90–113 (PQMKTSELEKRTERRTEAEKQRND) is disordered. The segment covering 95–113 (SELEKRTERRTEAEKQRND) has biased composition (basic and acidic residues). The I-domain stretch occupies residues 122–253 (SVNKFEKRLV…KKAFELIKKY (132 aa)). Positions 158, 160, 179, and 181 each coordinate Mg(2+). Glutamate 158 is a binding site for DNA. 2 residues coordinate DNA: glycine 231 and aspartate 233. Aspartate 233 is a Mg(2+) binding site. Residues 336 to 344 (QQARIDSFF) are interaction with PCNA. The segment at 348-378 (KVVTSETTKRKNEEKNNLKKRGPSLGKKAKK) is disordered. Basic and acidic residues predominate over residues 354 to 364 (TTKRKNEEKNN). Basic residues predominate over residues 365-378 (LKKRGPSLGKKAKK).

Belongs to the XPG/RAD2 endonuclease family. FEN1 subfamily. Interacts with PCNA. Three molecules of FEN1 bind to one PCNA trimer with each molecule binding to one PCNA monomer. PCNA stimulates the nuclease activity without altering cleavage specificity. Mg(2+) serves as cofactor. Phosphorylated. Phosphorylation upon DNA damage induces relocalization to the nuclear plasma.

Its subcellular location is the nucleus. It is found in the nucleolus. The protein resides in the nucleoplasm. It localises to the mitochondrion. Its function is as follows. Structure-specific nuclease with 5'-flap endonuclease and 5'-3' exonuclease activities involved in DNA replication and repair. During DNA replication, cleaves the 5'-overhanging flap structure that is generated by displacement synthesis when DNA polymerase encounters the 5'-end of a downstream Okazaki fragment. It enters the flap from the 5'-end and then tracks to cleave the flap base, leaving a nick for ligation. Also involved in the long patch base excision repair (LP-BER) pathway, by cleaving within the apurinic/apyrimidinic (AP) site-terminated flap. Acts as a genome stabilization factor that prevents flaps from equilibrating into structures that lead to duplications and deletions. Also possesses 5'-3' exonuclease activity on nicked or gapped double-stranded DNA, and exhibits RNase H activity. Also involved in replication and repair of rDNA and in repairing mitochondrial DNA. This chain is Flap endonuclease 1, found in Brugia malayi (Filarial nematode worm).